Reading from the N-terminus, the 254-residue chain is 3-deoxy-manno-octulosonate cytidylyltransferase (254 aa).

Belongs to the KdsB family.

The protein localises to the cytoplasm. The enzyme catalyses 3-deoxy-alpha-D-manno-oct-2-ulosonate + CTP = CMP-3-deoxy-beta-D-manno-octulosonate + diphosphate. Its pathway is nucleotide-sugar biosynthesis; CMP-3-deoxy-D-manno-octulosonate biosynthesis; CMP-3-deoxy-D-manno-octulosonate from 3-deoxy-D-manno-octulosonate and CTP: step 1/1. The protein operates within bacterial outer membrane biogenesis; lipopolysaccharide biosynthesis. Functionally, activates KDO (a required 8-carbon sugar) for incorporation into bacterial lipopolysaccharide in Gram-negative bacteria. This is 3-deoxy-manno-octulosonate cytidylyltransferase from Pseudomonas fluorescens (strain SBW25).